The primary structure comprises 1516 residues: UDP-glucose:glycoprotein glucosyltransferase 2 (1516 aa).

The N-terminal stretch at 1–27 (MAPAKATNVVRLLLGSTALWLSQLGSG) is a signal peptide. N-linked (GlcNAc...) asparagine glycans are attached at residues Asn256, Asn286, Asn920, and Asn950. The glucosyltransferase stretch occupies residues 1220–1516 (LHKENKKEKD…QDTILTHDEL (297 aa)). Phosphotyrosine is present on Tyr1289. The short motif at 1513 to 1516 (HDEL) is the Prevents secretion from ER element.

It belongs to the glycosyltransferase 8 family. In terms of assembly, interacts with METTL23. Interacts with SELENOF. Ca(2+) is required as a cofactor. It depends on Mn(2+) as a cofactor. As to expression, higher levels in kidney, pancreas, heart, and skeletal muscle.

The protein resides in the endoplasmic reticulum lumen. It is found in the endoplasmic reticulum-Golgi intermediate compartment. It catalyses the reaction N(4)-(alpha-D-Man-(1-&gt;2)-alpha-D-Man-(1-&gt;2)-alpha-D-Man-(1-&gt;3)-[alpha-D-Man-(1-&gt;2)-alpha-D-Man-(1-&gt;3)-[alpha-D-Man-(1-&gt;2)-alpha-D-Man-(1-&gt;6)]-alpha-D-Man-(1-&gt;6)]-beta-D-Man-(1-&gt;4)-beta-D-GlcNAc-(1-&gt;4)-beta-D-GlcNAc)-L-asparaginyl-[protein] (N-glucan mannose isomer 9A1,2,3B1,2,3) + UDP-alpha-D-glucose = N(4)-(alpha-D-Glc-(1-&gt;3)-alpha-D-Man-(1-&gt;2)-alpha-D-Man-(1-&gt;2)-alpha-D-Man-(1-&gt;3)-[alpha-D-Man-(1-&gt;2)-alpha-D-Man-(1-&gt;3)-[alpha-D-Man-(1-&gt;2)-alpha-D-Man-(1-&gt;6)]-alpha-D-Man-(1-&gt;6)]-beta-D-Man-(1-&gt;4)-beta-D-GlcNAc-(1-&gt;4)-beta-D-GlcNAc)-L-asparaginyl-[protein] + UDP + H(+). Its pathway is protein modification; protein glycosylation. Its activity is regulated as follows. Ethylenediaminetetraacetic acid completely abolishes catalytic activity. Catalytic activity is enhanced by complex formation with SELENOF. Its function is as follows. Recognizes glycoproteins with minor folding defects. Reglucosylates single N-glycans near the misfolded part of the protein, thus providing quality control for protein folding in the endoplasmic reticulum. Reglucosylated proteins are recognized by calreticulin for recycling to the endoplasmic reticulum and refolding or degradation. The polypeptide is UDP-glucose:glycoprotein glucosyltransferase 2 (UGGT2) (Homo sapiens (Human)).